Consider the following 171-residue polypeptide: Photosystem I assembly protein Ycf3 (171 aa).

3 TPR repeats span residues 35–68 (AFTY…EVDA), 72–105 (SYIL…NPYL), and 120–153 (GEQA…APTN).

The protein belongs to the Ycf3 family.

The protein resides in the plastid. It is found in the chloroplast thylakoid membrane. Functionally, essential for the assembly of the photosystem I (PSI) complex. May act as a chaperone-like factor to guide the assembly of the PSI subunits. The chain is Photosystem I assembly protein Ycf3 from Nephroselmis olivacea (Green alga).